Reading from the N-terminus, the 423-residue chain is Endochitinase 1 (423 aa).

A signal peptide spans 1 to 22; the sequence is MPSLFAQSLAIIATLQATLGLA. The GH18 domain occupies 39-401; that stretch reads YVNAVYFTNW…GTSSNKLGGP (363 aa). N-linked (GlcNAc...) asparagine glycosylation is found at N74, N78, and N96. Chitin-binding positions include 103-104 and 130-133; these read GT and GGWT. Catalysis depends on E172, which acts as the Proton donor. Residues Y173 and 238–241 contribute to the chitin site; that span reads MAYD. The N-linked (GlcNAc...) asparagine glycan is linked to N248. W378 contributes to the chitin binding site. Positions 380–423 are disordered; it reads ASSDRSGSQSLIGTSSNKLGGPDSTENLLNYPDSKYDNMRKQMA. Residues 383–407 show a composition bias toward polar residues; it reads DRSGSQSLIGTSSNKLGGPDSTENL. A compositionally biased stretch (basic and acidic residues) spans 413 to 423; that stretch reads SKYDNMRKQMA.

Belongs to the glycosyl hydrolase 18 family. Chitinase class V subfamily.

Its subcellular location is the secreted. The enzyme catalyses Random endo-hydrolysis of N-acetyl-beta-D-glucosaminide (1-&gt;4)-beta-linkages in chitin and chitodextrins.. In terms of biological role, secreted chitinase involved in the degradation of chitin, a component of the cell walls of fungi and exoskeletal elements of some animals (including worms and arthropods). Participates in the infection process and directly acts in the penetration process of the host cuticle. This is Endochitinase 1 (chit1) from Metarhizium anisopliae (Entomophthora anisopliae).